Reading from the N-terminus, the 223-residue chain is Small ribosomal subunit protein uS3 (223 aa).

One can recognise a KH type-2 domain in the interval 38–106; that stretch reads IRKFLDEKLK…QVHINIVEIK (69 aa).

Belongs to the universal ribosomal protein uS3 family. As to quaternary structure, part of the 30S ribosomal subunit. Forms a tight complex with proteins S10 and S14.

Functionally, binds the lower part of the 30S subunit head. Binds mRNA in the 70S ribosome, positioning it for translation. This chain is Small ribosomal subunit protein uS3, found in Lactobacillus delbrueckii subsp. bulgaricus (strain ATCC 11842 / DSM 20081 / BCRC 10696 / JCM 1002 / NBRC 13953 / NCIMB 11778 / NCTC 12712 / WDCM 00102 / Lb 14).